The sequence spans 130 residues: Small ribosomal subunit protein uS9 (130 aa).

Belongs to the universal ribosomal protein uS9 family.

This Cupriavidus necator (strain ATCC 17699 / DSM 428 / KCTC 22496 / NCIMB 10442 / H16 / Stanier 337) (Ralstonia eutropha) protein is Small ribosomal subunit protein uS9.